The chain runs to 445 residues: Asparagine--tRNA ligase (445 aa).

It belongs to the class-II aminoacyl-tRNA synthetase family. As to quaternary structure, homodimer.

Its subcellular location is the cytoplasm. It catalyses the reaction tRNA(Asn) + L-asparagine + ATP = L-asparaginyl-tRNA(Asn) + AMP + diphosphate + H(+). The sequence is that of Asparagine--tRNA ligase from Deinococcus deserti (strain DSM 17065 / CIP 109153 / LMG 22923 / VCD115).